The following is a 371-amino-acid chain: Isopentenyl-diphosphate delta-isomerase (371 aa).

Residue 9–10 (RK) coordinates substrate. Residues T66, 67-69 (GMT), S100, and N128 contribute to the FMN site. A substrate-binding site is contributed by 100–102 (SQR). Residue Q167 participates in substrate binding. Residue E168 coordinates Mg(2+). Residues K199, S224, T229, 278 to 280 (GMR), and 299 to 300 (AL) contribute to the FMN site.

This sequence belongs to the IPP isomerase type 2 family. In terms of assembly, homooctamer. Dimer of tetramers. The cofactor is FMN. NADPH serves as cofactor. It depends on Mg(2+) as a cofactor.

The protein localises to the cytoplasm. The catalysed reaction is isopentenyl diphosphate = dimethylallyl diphosphate. In terms of biological role, involved in the biosynthesis of isoprenoids. Catalyzes the 1,3-allylic rearrangement of the homoallylic substrate isopentenyl (IPP) to its allylic isomer, dimethylallyl diphosphate (DMAPP). This Pyrococcus horikoshii (strain ATCC 700860 / DSM 12428 / JCM 9974 / NBRC 100139 / OT-3) protein is Isopentenyl-diphosphate delta-isomerase.